The primary structure comprises 316 residues: Secondary metabolism regulator LAE1 (316 aa).

This sequence belongs to the methyltransferase superfamily. LaeA methyltransferase family. As to quaternary structure, component of the heterotrimeric velvet complex composed of LAE1, VEL1 and VEL2; VEL1 acting as a bridging protein between LAE1 and VEL2. Interacts with VEL1.

The protein localises to the nucleus. The enzyme catalyses L-methionyl-[protein] + S-adenosyl-L-methionine = S-methyl-L-methionyl-[protein] + S-adenosyl-L-homocysteine. Its function is as follows. Methyltransferase that performs automethylation. No other methyl-accepting substrate has been identified yet. Component of the velvet transcription factor complex that acts as a global regulator for secondary metabolite gene expression. Controls the expression of the gibberellins gene clusters, but does not affect bikaverin production. Controls the expression of the fusaric acid gene cluster. Acts as a virulence factors during infection, most likely through activation of gibberellins biosynthesis. The protein is Secondary metabolism regulator LAE1 of Gibberella fujikuroi (strain CBS 195.34 / IMI 58289 / NRRL A-6831) (Bakanae and foot rot disease fungus).